The following is a 522-amino-acid chain: Amphoterin-induced protein 2 (522 aa).

Residues 1–39 (MSLRVHTLPTLLGAVVRPGCRELLCLLMITVAVGPGASG) form the signal peptide. In terms of domain architecture, LRRNT spans 40–68 (VCPTACICATDIVSCTNKHLSKVPGNLFR). Over 40–398 (VCPTACICAT…RSHAHEAFNT (359 aa)) the chain is Extracellular. 2 cysteine pairs are disulfide-bonded: cysteine 41–cysteine 47 and cysteine 45–cysteine 54. LRR repeat units lie at residues 69 to 90 (LMKRLDLSYNRIGLLDSEWIPV), 94 to 115 (KLNTLILRHNNITSISTGSFST), 118 to 139 (NLKCLDLSSNKLKTVKNAVFQE), 142 to 163 (VLEVLLLYNNHISYLDPSAFGG), 166 to 187 (QLQKLYLSGNFLTQFPMDLYVG), and 193 to 214 (ELMFLDVSYNRIPSMPMHHINL). Asparagine 104 carries an N-linked (GlcNAc...) asparagine glycan. The LRRCT domain occupies 228 to 284 (NPFVCDCSLYSLLVFWYRRHFSSVMDFKNDYTCRLWSDSRHSRQVLLLQDSFMNCSD). 2 disulfides stabilise this stretch: cysteine 232/cysteine 260 and cysteine 234/cysteine 282. Asparagine 281, asparagine 288, asparagine 345, asparagine 373, asparagine 381, and asparagine 384 each carry an N-linked (GlcNAc...) asparagine glycan. In terms of domain architecture, Ig-like C2-type spans 289 to 379 (GSFRALGFIH…RLLNETVDVT (91 aa)). Cysteine 310 and cysteine 363 are joined by a disulfide. The chain crosses the membrane as a helical span at residues 399-419 (AFTTLAACVASIVLVLLYLYL). Residues 420–522 (TPCPCKCKTK…FSDTPFVAST (103 aa)) are Cytoplasmic-facing. A disordered region spans residues 501 to 522 (RGKSDSDSVNSVFSDTPFVAST).

This sequence belongs to the immunoglobulin superfamily. AMIGO family. Binds itself as well as AMIGO1 and AMIGO3.

Its subcellular location is the cell membrane. The protein resides in the nucleus. In terms of biological role, required for depolarization-dependent survival of cultured cerebellar granule neurons. May mediate homophilic as well as heterophilic cell-cell interaction with AMIGO1 or AMIGO3. May contribute to signal transduction through its intracellular domain. The chain is Amphoterin-induced protein 2 from Pongo abelii (Sumatran orangutan).